Here is a 743-residue protein sequence, read N- to C-terminus: Tudor domain-containing protein 3 (743 aa).

The tract at residues 241–262 is disordered; it reads KTFGGGGGGARSNLNIGAAGHR. Residues 286 to 326 enclose the UBA domain; the sequence is LVDEKALKHITEMGFSKEASRQALMDNANNLEAALNVLLNS. Disordered regions lie at residues 327–365 and 380–549; these read SKQK…APST and EEPK…CYER. Ser-349 is modified (phosphoserine). Residues 414-431 are compositionally biased toward basic and acidic residues; that stretch reads PRNDTRQPRNERPPRFQK. Residues 432 to 445 show a composition bias toward polar residues; sequence DTPTSKSTVENSVL. Ser-438 is modified (phosphoserine). Basic and acidic residues-rich tracts occupy residues 464-484 and 536-549; these read AEER…KDAS and RENQ…CYER. Lys-563 participates in a covalent cross-link: Glycyl lysine isopeptide (Lys-Gly) (interchain with G-Cter in SUMO2). Residues 572 to 603 form a disordered region; it reads TDYPRPVQSNSLGVPNGETAPPLKGRRVGPIK. The region spanning 647–707 is the Tudor domain; the sequence is VWKPGDECFA…KPVQTEAWEE (61 aa). Residues 711-725 are compositionally biased toward basic and acidic residues; the sequence is YDHTIEFRRGGDGQP. The interval 711 to 743 is disordered; that stretch reads YDHTIEFRRGGDGQPRRSTRPTQQFYQPPRARN. Residues 723–743 form an EBM motif; may mediate interaction with the EJC region; it reads GQPRRSTRPTQQFYQPPRARN.

As to quaternary structure, component of mRNA stress granules. Interacts with FMR1, FXR1, FXR2, EWSR1, FUS, SERBP1, EEF1A1 and DDX3X or DDX3Y, and with the small nuclear ribonucleoprotein-associated proteins SNRPB and SNRPN. Interacts with 'Lys-48'-linked tetra-ubiquitin, but not with monoubiquitin or 'Lys-63'-linked ubiquitin chains. May interact with the exon junction complex (EJC) composed at least of CASC3, EIF4A3, MAGOH and RBM8A. Interacts with POLR2A (via the C-terminal domain (CTD)).

The protein resides in the cytoplasm. It localises to the nucleus. Scaffolding protein that specifically recognizes and binds dimethylarginine-containing proteins. Plays a role in the regulation of translation of target mRNAs by binding Arg/Gly-rich motifs (GAR) in dimethylarginine-containing proteins. In nucleus, acts as a coactivator: recognizes and binds asymmetric dimethylation on the core histone tails associated with transcriptional activation (H3R17me2a and H4R3me2a) and recruits proteins at these arginine-methylated loci. In cytoplasm, acts as an antiviral factor that participates in the assembly of stress granules together with G3BP1. This Mus musculus (Mouse) protein is Tudor domain-containing protein 3 (Tdrd3).